Reading from the N-terminus, the 572-residue chain is Urease subunit alpha (572 aa).

The Urease domain occupies 134–572 (GGIDAHVHMI…VSLGQLYFFS (439 aa)). 3 residues coordinate Ni(2+): His-139, His-141, and Lys-222. Lys-222 carries the post-translational modification N6-carboxylysine. Residue His-224 participates in substrate binding. Ni(2+) contacts are provided by His-251 and His-277. His-325 functions as the Proton donor in the catalytic mechanism. Asp-365 serves as a coordination point for Ni(2+).

The protein belongs to the metallo-dependent hydrolases superfamily. Urease alpha subunit family. Heterotrimer of UreA (gamma), UreB (beta) and UreC (alpha) subunits. Three heterotrimers associate to form the active enzyme. Ni cation serves as cofactor. In terms of processing, carboxylation allows a single lysine to coordinate two nickel ions.

It localises to the cytoplasm. The catalysed reaction is urea + 2 H2O + H(+) = hydrogencarbonate + 2 NH4(+). It participates in nitrogen metabolism; urea degradation; CO(2) and NH(3) from urea (urease route): step 1/1. The sequence is that of Urease subunit alpha from Laribacter hongkongensis (strain HLHK9).